A 545-amino-acid polypeptide reads, in one-letter code: Chaperonin GroEL (545 aa).

ATP is bound by residues 29-32 (TLGP), K50, 86-90 (DGTTT), G415, and D495.

It belongs to the chaperonin (HSP60) family. In terms of assembly, forms a cylinder of 14 subunits composed of two heptameric rings stacked back-to-back. Interacts with the co-chaperonin GroES.

It is found in the cytoplasm. It carries out the reaction ATP + H2O + a folded polypeptide = ADP + phosphate + an unfolded polypeptide.. Its function is as follows. Together with its co-chaperonin GroES, plays an essential role in assisting protein folding. The GroEL-GroES system forms a nano-cage that allows encapsulation of the non-native substrate proteins and provides a physical environment optimized to promote and accelerate protein folding. The sequence is that of Chaperonin GroEL from Phocaeicola vulgatus (strain ATCC 8482 / DSM 1447 / JCM 5826 / CCUG 4940 / NBRC 14291 / NCTC 11154) (Bacteroides vulgatus).